Here is a 553-residue protein sequence, read N- to C-terminus: Arginine--tRNA ligase (553 aa).

The 'HIGH' region motif lies at 123-133 (ANPTGPLTIGR).

The protein belongs to the class-I aminoacyl-tRNA synthetase family. Monomer.

The protein resides in the cytoplasm. The enzyme catalyses tRNA(Arg) + L-arginine + ATP = L-arginyl-tRNA(Arg) + AMP + diphosphate. The polypeptide is Arginine--tRNA ligase (Chlorobium phaeobacteroides (strain BS1)).